Here is a 757-residue protein sequence, read N- to C-terminus: Endonuclease MutS2 (757 aa).

Residue 321-328 coordinates ATP; that stretch reads GPNMGGKT. The Smr domain maps to 681–756; that stretch reads IDIRGMTVEE…GTGVTVVEVK (76 aa).

Belongs to the DNA mismatch repair MutS family. MutS2 subfamily. In terms of assembly, homodimer. Binds to stalled ribosomes, contacting rRNA.

In terms of biological role, endonuclease that is involved in the suppression of homologous recombination and thus may have a key role in the control of bacterial genetic diversity. Its function is as follows. Acts as a ribosome collision sensor, splitting the ribosome into its 2 subunits. Detects stalled/collided 70S ribosomes which it binds and splits by an ATP-hydrolysis driven conformational change. Acts upstream of the ribosome quality control system (RQC), a ribosome-associated complex that mediates the extraction of incompletely synthesized nascent chains from stalled ribosomes and their subsequent degradation. Probably generates substrates for RQC. The protein is Endonuclease MutS2 of Thermotoga petrophila (strain ATCC BAA-488 / DSM 13995 / JCM 10881 / RKU-1).